The chain runs to 317 residues: GTPase Era (317 aa).

An Era-type G domain is found at 23–190 (RSGFVALIGP…MDYLVETLPE (168 aa)). Residues 31 to 38 (GPTNAGKS) are G1. 31 to 38 (GPTNAGKS) provides a ligand contact to GTP. Residues 57 to 61 (QTTRA) are G2. The tract at residues 78–81 (DTPG) is G3. GTP is bound by residues 78-82 (DTPGI) and 140-143 (NKID). Residues 140 to 143 (NKID) are G4. The tract at residues 169 to 171 (ISA) is G5. The region spanning 221-298 (LHQELPYASH…HLFLFVKVRE (78 aa)) is the KH type-2 domain.

Belongs to the TRAFAC class TrmE-Era-EngA-EngB-Septin-like GTPase superfamily. Era GTPase family. Monomer.

It is found in the cytoplasm. Its subcellular location is the cell inner membrane. Its function is as follows. An essential GTPase that binds both GDP and GTP, with rapid nucleotide exchange. Plays a role in 16S rRNA processing and 30S ribosomal subunit biogenesis and possibly also in cell cycle regulation and energy metabolism. The polypeptide is GTPase Era (Agrobacterium fabrum (strain C58 / ATCC 33970) (Agrobacterium tumefaciens (strain C58))).